The primary structure comprises 548 residues: Natural resistance-associated macrophage protein 1 (548 aa).

Over residues 1-11 (MSGDTGPSKQG) the composition is skewed to polar residues. Positions 1–38 (MSGDTGPSKQGGTRYGSISSPPSPGPQQAPPGGTYLGE) are disordered. At 1–55 (MSGDTGPSKQGGTRYGSISSPPSPGPQQAPPGGTYLGEKIPIPDTESGAFSLRKL) the chain is on the cytoplasmic side. Residues 56-73 (WAFTGPGFLMSIAFLDPG) form a helical membrane-spanning segment. Topologically, residues 74–82 (NIESDLQAG) are extracellular. A helical transmembrane segment spans residues 83-102 (AVAGFKLLWVLLWATVLGLL). At 103–139 (CQRLAARLGVVTGKDLGEVCHLYYPKVPRILLWLTIE) the chain is on the cytoplasmic side. A helical transmembrane segment spans residues 140–160 (LAIVGSDMQEVIGTAIAFSLL). The Extracellular portion of the chain corresponds to 161-164 (SAGR). A helical transmembrane segment spans residues 165–184 (IPLWGGVLITVVDTFFFLFL). Residues 185–193 (DNYGLRKLE) lie on the Cytoplasmic side of the membrane. A helical transmembrane segment spans residues 194–214 (AFFGFLITIMALTFGYEYVVA). Over 215-237 (QPAQGALLQGLFLPSCRGCGQPE) the chain is Extracellular. A helical membrane pass occupies residues 238-256 (LLQAVGIIGAIIMPHNIYL). At 257 to 284 (HSSLVKSREVDRSRRADIREANMYFLIE) the chain is on the cytoplasmic side. The helical transmembrane segment at 285–304 (ATIALSVSFLINLFVMAVFG) threads the bilayer. Over 305–346 (QAFYKQTNQAAFNICAKSSLHDYAPIFPRNNLTVAVDIYQGG) the chain is Extracellular. A glycan (N-linked (GlcNAc...) asparagine) is linked at asparagine 335. Residues 347–366 (VILGCLFGPAALYIWAVGLL) form a helical membrane-spanning segment. The Cytoplasmic segment spans residues 367-397 (AAGQSSTMTGTYAGQFVMEGFLKLRWSRFAR). Residues 398-415 (VLLTRSCAILPTVLLAVF) traverse the membrane as a helical segment. Residues 416-426 (RDLRDLSGLND) lie on the Extracellular side of the membrane. The helical transmembrane segment at 427-447 (LLNVLQSLLLPFAVLPILTFT) threads the bilayer. At 448 to 463 (SMPALMQEFANGLVSK) the chain is on the cytoplasmic side. A helical transmembrane segment spans residues 464–485 (VITSSIMVLVCAVNLYFVISYV). At 486–493 (PSLPHPAY) the chain is on the extracellular side. The helical transmembrane segment at 494 to 513 (FSLVALLAAAYLGLTTYLVW) threads the bilayer. The Cytoplasmic portion of the chain corresponds to 514-548 (TCLITQGATFLAHNSHQRFLYGLPEEDQEKGRTSG).

Belongs to the NRAMP family.

It localises to the late endosome membrane. It is found in the lysosome membrane. It catalyses the reaction Zn(2+)(in) + H(+)(out) = Zn(2+)(out) + H(+)(in). It carries out the reaction Fe(2+)(in) + H(+)(out) = Fe(2+)(out) + H(+)(in). The enzyme catalyses Mn(2+)(in) + H(+)(out) = Mn(2+)(out) + H(+)(in). Its function is as follows. Macrophage-specific antiporter that fluxes metal ions in either direction against a proton gradient. Localized to late endosomal lysosomal membranes, delivers bivalent cations from the cytosol into these acidic compartments where they may directly affect antimicrobial activity. Involved in iron metabolism and host natural resistance to infection with intracellular parasites. Pathogen resistance involves sequestration of Fe(2+) and Mn(2+), cofactors of both prokaryotic and eukaryotic catalases and superoxide dismutases, not only to protect the macrophage against its own generation of reactive oxygen species, but to deny the cations to the pathogen for synthesis of its protective enzymes. This is Natural resistance-associated macrophage protein 1 (SLC11A1) from Bubalus bubalis (Domestic water buffalo).